A 245-amino-acid polypeptide reads, in one-letter code: Probable phosphatase NT01EI_1577 (245 aa).

The Zn(2+) site is built by histidine 7, histidine 9, histidine 15, histidine 40, glutamate 73, histidine 101, histidine 131, aspartate 192, and histidine 194.

This sequence belongs to the PHP family. In terms of assembly, homotrimer. Requires Zn(2+) as cofactor.

The sequence is that of Probable phosphatase NT01EI_1577 from Edwardsiella ictaluri (strain 93-146).